A 525-amino-acid chain; its full sequence is GMP synthase [glutamine-hydrolyzing] (525 aa).

One can recognise a Glutamine amidotransferase type-1 domain in the interval 9-207 (KILILDFGSQ…IVDICGCDTL (199 aa)). Cysteine 86 functions as the Nucleophile in the catalytic mechanism. Active-site residues include histidine 181 and glutamate 183. Residues 208–400 (WTPANIAQDA…LGLPYDMVYR (193 aa)) form the GMPS ATP-PPase domain. An ATP-binding site is contributed by 235–241 (SGGVDSS).

As to quaternary structure, homodimer.

The enzyme catalyses XMP + L-glutamine + ATP + H2O = GMP + L-glutamate + AMP + diphosphate + 2 H(+). It functions in the pathway purine metabolism; GMP biosynthesis; GMP from XMP (L-Gln route): step 1/1. In terms of biological role, catalyzes the synthesis of GMP from XMP. The chain is GMP synthase [glutamine-hydrolyzing] from Marinomonas sp. (strain MWYL1).